A 506-amino-acid polypeptide reads, in one-letter code: Acetaldehyde dehydrogenase (506 aa).

Catalysis depends on residues glutamate 262 and cysteine 301.

Belongs to the aldehyde dehydrogenase family.

The enzyme catalyses acetaldehyde + NAD(+) + H2O = acetate + NADH + 2 H(+). It participates in alcohol metabolism; ethanol degradation; acetate from ethanol: step 2/2. Functionally, catalyzes the NAD(+)-dependent oxidation of acetaldehyde to acetate. Is likely a component of the ethanol oxidation system that allows P.aeruginosa to grow on ethanol as the sole carbon and energy source. The protein is Acetaldehyde dehydrogenase of Pseudomonas aeruginosa.